Reading from the N-terminus, the 726-residue chain is Eukaryotic translation initiation factor 3 subunit B (726 aa).

Residues 1-94 (MSAALEDIKL…LFVECASPAD (94 aa)) form a sufficient for interaction with HCR1 and TIF32 region. Residues 1–219 (MSAALEDIKL…GVVMWGGPHF (219 aa)) are sufficient for interaction with PIC8. The region spanning 37 to 120 (QYIVVCGAPV…HRLFIYTMRD (84 aa)) is the RRM domain. 7 WD repeats span residues 142-182 (FPTS…EESV), 186-224 (RKNW…RLRR), 235-283 (VSPS…LQST), 331-374 (LKVP…MSCK), 442-485 (ELKD…FAPE), 505-549 (ITDK…TDKN), and 566-611 (NSFP…VKEE).

The protein belongs to the eIF-3 subunit B family. As to quaternary structure, component of the eukaryotic translation initiation factor 3 (eIF-3) complex.

It is found in the cytoplasm. RNA-binding component of the eukaryotic translation initiation factor 3 (eIF-3) complex, which is involved in protein synthesis of a specialized repertoire of mRNAs and, together with other initiation factors, stimulates binding of mRNA and methionyl-tRNAi to the 40S ribosome. The eIF-3 complex specifically targets and initiates translation of a subset of mRNAs involved in cell proliferation. This chain is Eukaryotic translation initiation factor 3 subunit B, found in Vanderwaltozyma polyspora (strain ATCC 22028 / DSM 70294 / BCRC 21397 / CBS 2163 / NBRC 10782 / NRRL Y-8283 / UCD 57-17) (Kluyveromyces polysporus).